Consider the following 341-residue polypeptide: S-adenosylmethionine:tRNA ribosyltransferase-isomerase (341 aa).

The protein belongs to the QueA family. As to quaternary structure, monomer.

The protein localises to the cytoplasm. The catalysed reaction is 7-aminomethyl-7-carbaguanosine(34) in tRNA + S-adenosyl-L-methionine = epoxyqueuosine(34) in tRNA + adenine + L-methionine + 2 H(+). Its pathway is tRNA modification; tRNA-queuosine biosynthesis. In terms of biological role, transfers and isomerizes the ribose moiety from AdoMet to the 7-aminomethyl group of 7-deazaguanine (preQ1-tRNA) to give epoxyqueuosine (oQ-tRNA). This Citrifermentans bemidjiense (strain ATCC BAA-1014 / DSM 16622 / JCM 12645 / Bem) (Geobacter bemidjiensis) protein is S-adenosylmethionine:tRNA ribosyltransferase-isomerase.